Here is a 46-residue protein sequence, read N- to C-terminus: Major urinary protein (46 aa).

An N-linked (GlcNAc...) asparagine glycan is attached at Asn15.

The protein belongs to the calycin superfamily. Lipocalin family. Found in many tissues including liver, urine, preputial gland, clitoral gland, submandibular gland and salivary gland.

The protein resides in the secreted. Its function is as follows. Binds pheromones that are released from drying urine of males. These pheromones affect the sexual behavior of females. Acts as a shuttle for pheromonal communication between individuals of the same species. This chain is Major urinary protein, found in Rattus rattus (Black rat).